Reading from the N-terminus, the 890-residue chain is Translation initiation factor IF-2 (890 aa).

The segment at 45–304 (LIDHLNQKNS…LQQGFQKPAQ (260 aa)) is disordered. Residues 67–81 (STLNIPGTGGKSKSV) are compositionally biased toward polar residues. The span at 92–217 (VKRDPQEAER…RMAEENKWTD (126 aa)) shows a compositional bias: basic and acidic residues. Over residues 252–266 (GRGRNAKAARPKKGN) the composition is skewed to basic residues. Residues 267–280 (KHAESKADREEARA) show a composition bias toward basic and acidic residues. Positions 389–558 (PRAPVVTIMG…LLQAEVLELK (170 aa)) constitute a tr-type G domain. Positions 398–405 (GHVDHGKT) are G1. 398–405 (GHVDHGKT) lines the GTP pocket. Residues 423–427 (GITQH) are G2. Residues 444 to 447 (DTPG) form a G3 region. GTP is bound by residues 444–448 (DTPGH) and 498–501 (NKID). The G4 stretch occupies residues 498 to 501 (NKID). The tract at residues 534–536 (SAK) is G5. K808 carries the post-translational modification N6-acetyllysine.

The protein belongs to the TRAFAC class translation factor GTPase superfamily. Classic translation factor GTPase family. IF-2 subfamily.

The protein localises to the cytoplasm. One of the essential components for the initiation of protein synthesis. Protects formylmethionyl-tRNA from spontaneous hydrolysis and promotes its binding to the 30S ribosomal subunits. Also involved in the hydrolysis of GTP during the formation of the 70S ribosomal complex. This is Translation initiation factor IF-2 from Escherichia coli (strain SMS-3-5 / SECEC).